The chain runs to 96 residues: Cysteine protease immunity 1 (96 aa).

This chain is Cysteine protease immunity 1, found in Escherichia coli O1:K1:H7 (strain ATCC 11775 / DSM 30083 / JCM 1649 / NBRC 102203 / NCTC 9001 / U5/41).